A 347-amino-acid polypeptide reads, in one-letter code: Dual-specificity RNA methyltransferase RlmN (347 aa).

The active-site Proton acceptor is the Glu-93. The Radical SAM core domain maps to 99 to 327 (DEGRNTLCIS…VITRDSRGSD (229 aa)). A disulfide bridge links Cys-106 with Cys-332. Residues Cys-113, Cys-117, and Cys-120 each coordinate [4Fe-4S] cluster. S-adenosyl-L-methionine is bound by residues 158–159 (GE), Ser-190, 213–215 (SLN), and Asn-289. Catalysis depends on Cys-332, which acts as the S-methylcysteine intermediate.

This sequence belongs to the radical SAM superfamily. RlmN family. It depends on [4Fe-4S] cluster as a cofactor.

It is found in the cytoplasm. It carries out the reaction adenosine(2503) in 23S rRNA + 2 reduced [2Fe-2S]-[ferredoxin] + 2 S-adenosyl-L-methionine = 2-methyladenosine(2503) in 23S rRNA + 5'-deoxyadenosine + L-methionine + 2 oxidized [2Fe-2S]-[ferredoxin] + S-adenosyl-L-homocysteine. It catalyses the reaction adenosine(37) in tRNA + 2 reduced [2Fe-2S]-[ferredoxin] + 2 S-adenosyl-L-methionine = 2-methyladenosine(37) in tRNA + 5'-deoxyadenosine + L-methionine + 2 oxidized [2Fe-2S]-[ferredoxin] + S-adenosyl-L-homocysteine. Specifically methylates position 2 of adenine 2503 in 23S rRNA and position 2 of adenine 37 in tRNAs. m2A2503 modification seems to play a crucial role in the proofreading step occurring at the peptidyl transferase center and thus would serve to optimize ribosomal fidelity. The sequence is that of Dual-specificity RNA methyltransferase RlmN from Pelobacter propionicus (strain DSM 2379 / NBRC 103807 / OttBd1).